The chain runs to 259 residues: Proteasome subunit alpha (259 aa).

Residues 222–259 are disordered; the sequence is RITGPALEQLIPAEPAPASEPAPESKPDTETKPADPQD. Positions 244–259 are enriched in basic and acidic residues; sequence PESKPDTETKPADPQD.

It belongs to the peptidase T1A family. The 20S proteasome core is composed of 14 alpha and 14 beta subunits that assemble into four stacked heptameric rings, resulting in a barrel-shaped structure. The two inner rings, each composed of seven catalytic beta subunits, are sandwiched by two outer rings, each composed of seven alpha subunits. The catalytic chamber with the active sites is on the inside of the barrel. Has a gated structure, the ends of the cylinder being occluded by the N-termini of the alpha-subunits. Is capped by the proteasome-associated ATPase, ARC.

It is found in the cytoplasm. It participates in protein degradation; proteasomal Pup-dependent pathway. Its activity is regulated as follows. The formation of the proteasomal ATPase ARC-20S proteasome complex, likely via the docking of the C-termini of ARC into the intersubunit pockets in the alpha-rings, may trigger opening of the gate for substrate entry. Interconversion between the open-gate and close-gate conformations leads to a dynamic regulation of the 20S proteasome proteolysis activity. In terms of biological role, component of the proteasome core, a large protease complex with broad specificity involved in protein degradation. The protein is Proteasome subunit alpha of Rhodococcus jostii (strain RHA1).